The chain runs to 626 residues: Janus kinase and microtubule-interacting protein 1 (626 aa).

Residues Met-1–Glu-25 are disordered. Residues Met-1–Val-365 form a mediates association with microtubules region. Coiled-coil stretches lie at residues Glu-13–Arg-255 and Glu-284–Ser-413. Residues Val-365–Val-626 form a mediates interaction with TYK2 and GABBR1 region. The residue at position 382 (Ser-382) is a Phosphoserine. Residues Glu-452 to Thr-461 are compositionally biased toward polar residues. The segment at Glu-452 to Arg-481 is disordered. At Thr-470 the chain carries Phosphothreonine. Positions Gln-490–Arg-604 form a coiled coil.

The protein belongs to the JAKMIP family. As to quaternary structure, homodimer. Interacts with JAK1 and TYK2. Forms a complex with GABBR1 and KIF5B/kinesin-1. Post-translationally, phosphorylated. As to expression, specifically expressed in brain and testis by spermatogonia, spermatocytes, spermatozoa and Sertoli cells (at protein level).

The protein resides in the cytoplasm. It is found in the cytoskeleton. Its subcellular location is the membrane. Its function is as follows. Associates with microtubules and may play a role in the microtubule-dependent transport of the GABA-B receptor. May play a role in JAK1 signaling and regulate microtubule cytoskeleton rearrangements. The protein is Janus kinase and microtubule-interacting protein 1 (Jakmip1) of Rattus norvegicus (Rat).